The following is a 142-amino-acid chain: Large ribosomal subunit protein uL11 (142 aa).

It belongs to the universal ribosomal protein uL11 family. In terms of assembly, part of the ribosomal stalk of the 50S ribosomal subunit. Interacts with L10 and the large rRNA to form the base of the stalk. L10 forms an elongated spine to which L12 dimers bind in a sequential fashion forming a multimeric L10(L12)X complex. One or more lysine residues are methylated.

Its function is as follows. Forms part of the ribosomal stalk which helps the ribosome interact with GTP-bound translation factors. This chain is Large ribosomal subunit protein uL11, found in Histophilus somni (strain 129Pt) (Haemophilus somnus).